Here is a 210-residue protein sequence, read N- to C-terminus: Peroxiredoxin-5, mitochondrial (210 aa).

The transit peptide at 1–48 (MLQLGLRVLGCKASSVLRASTCLAGRAGRKEAGWECGGARSFSSSAVT) directs the protein to the mitochondrion. The 159-residue stretch at 52 to 210 (IKVGDAIPSV…SLAPNILSQL (159 aa)) folds into the Thioredoxin domain. Lys70 bears the N6-acetyllysine; alternate mark. Position 70 is an N6-succinyllysine; alternate (Lys70). At Lys71 the chain carries N6-acetyllysine. The residue at position 79 (Lys79) is an N6-acetyllysine; alternate. Position 79 is an N6-succinyllysine; alternate (Lys79). The active-site Cysteine sulfenic acid (-SOH) intermediate is Cys96. Residue Cys96 is the site of S-palmitoyl cysteine attachment. Cys96 and Cys200 are disulfide-bonded. Lys112 bears the N6-succinyllysine mark. Residues Ser167 and Ser178 each carry the phosphoserine modification. The short motif at 208–210 (SQL) is the Microbody targeting signal element.

The protein belongs to the peroxiredoxin family. Prx5 subfamily. In terms of assembly, monomer. In terms of processing, S-palmitoylated. Palmitoylation occurs on the active site, inhibiting its reactivity; therefore PRDX5 palmitoylation status determines its antioxidant capacity. Post-translationally, S-palmitoylated. Depalmitoylated by ABHD10. As to expression, widely expressed.

The protein resides in the mitochondrion. It is found in the cytoplasm. Its subcellular location is the peroxisome matrix. The catalysed reaction is a hydroperoxide + [thioredoxin]-dithiol = an alcohol + [thioredoxin]-disulfide + H2O. Functionally, thiol-specific peroxidase that catalyzes the reduction of hydrogen peroxide and organic hydroperoxides to water and alcohols, respectively. Plays a role in cell protection against oxidative stress by detoxifying peroxides and as sensor of hydrogen peroxide-mediated signaling events. This chain is Peroxiredoxin-5, mitochondrial, found in Mus musculus (Mouse).